Consider the following 436-residue polypeptide: Ribulose bisphosphate carboxylase large chain (436 aa).

2 residues coordinate substrate: N104 and T154. K156 serves as the catalytic Proton acceptor. K158 is a binding site for substrate. Mg(2+)-binding residues include K182, D184, and E185. K182 carries the post-translational modification N6-carboxylysine. The Proton acceptor role is filled by H275. The substrate site is built by R276, H308, and S360.

The protein belongs to the RuBisCO large chain family. Type I subfamily. In terms of assembly, heterohexadecamer of 8 large chains and 8 small chains; disulfide-linked. The disulfide link is formed within the large subunit homodimers. Mg(2+) is required as a cofactor. In terms of processing, the disulfide bond which can form in the large chain dimeric partners within the hexadecamer appears to be associated with oxidative stress and protein turnover.

It is found in the plastid. Its subcellular location is the chloroplast. It catalyses the reaction 2 (2R)-3-phosphoglycerate + 2 H(+) = D-ribulose 1,5-bisphosphate + CO2 + H2O. It carries out the reaction D-ribulose 1,5-bisphosphate + O2 = 2-phosphoglycolate + (2R)-3-phosphoglycerate + 2 H(+). RuBisCO catalyzes two reactions: the carboxylation of D-ribulose 1,5-bisphosphate, the primary event in carbon dioxide fixation, as well as the oxidative fragmentation of the pentose substrate in the photorespiration process. Both reactions occur simultaneously and in competition at the same active site. The polypeptide is Ribulose bisphosphate carboxylase large chain (Euglena anabaena (Euglenaria anabaena)).